A 473-amino-acid polypeptide reads, in one-letter code: Argininosuccinate lyase (473 aa).

This sequence belongs to the lyase 1 family. Argininosuccinate lyase subfamily.

The protein resides in the cytoplasm. The catalysed reaction is 2-(N(omega)-L-arginino)succinate = fumarate + L-arginine. The protein operates within amino-acid biosynthesis; L-arginine biosynthesis; L-arginine from L-ornithine and carbamoyl phosphate: step 3/3. This is Argininosuccinate lyase from Bordetella pertussis (strain Tohama I / ATCC BAA-589 / NCTC 13251).